Reading from the N-terminus, the 419-residue chain is Indole prenyltransferase tdiB (419 aa).

58–59 (PS) is a binding site for L-tryptophan. Residues Arg81, Lys165, Tyr167, Arg236, Lys238, Tyr240, Tyr330, and Tyr394 each contribute to the substrate site.

The protein belongs to the tryptophan dimethylallyltransferase family.

The catalysed reaction is didemethylasterriquinone D + dimethylallyl diphosphate = asterriquinone C1 + diphosphate. It participates in secondary metabolite biosynthesis. Its function is as follows. Indole prenyltransferase; part of the gene cluster that mediates the biosynthesis of terrequinone A, an antitumor agent. The first step in the biosynthetic pathway for terrequinone A is formation of indole pyruvic acid (IPA) from L-tryptophan by the aminotransferase tdiD. The nonribosomal peptide synthase tdiA then immediately converts unstable IPA to didemethylasterriquinone D (DDAQ D), via condensation of 2 IPA molecules. The symmetric connectivity of the 2 IPA molecules is thought to arise by head-to-tail dual Claisen condensations facilitated by the TE domain. TdiB then catalyzes reverse prenylation by transferring dimethylallyl diphosphate to carbon atom 2' of DDAQ D, to yield asterriquinone C-1. Finally, tdiC and tdiE enzymes robustly convert asterriquinone C-1 to terrequinone A via a transformation involving regular prenylation at carbon atom 5, which requires elimination of the hydroxy group on C-5. This chain is Indole prenyltransferase tdiB, found in Emericella nidulans (strain FGSC A4 / ATCC 38163 / CBS 112.46 / NRRL 194 / M139) (Aspergillus nidulans).